The following is a 253-amino-acid chain: Pre-mRNA-splicing factor SPF27 homolog (253 aa).

The stretch at 124–235 forms a coiled coil; sequence KQYLQKNQRS…IDSFKKEAAE (112 aa).

This sequence belongs to the SPF27 family. Component of the multiprotein assembly MOS4-associated complex (MAC) at least composed of MOS4, CDC5 and PRL1. Interacts with CYCL1-1 and CDC5. Associated with the spliceosome. Interacts with ENY2.

It is found in the nucleus. Component of the MAC complex that probably regulates defense responses through transcriptional control and thereby is essential for plant innate immunity. Involved in mRNA splicing. The sequence is that of Pre-mRNA-splicing factor SPF27 homolog (MOS4) from Arabidopsis thaliana (Mouse-ear cress).